The sequence spans 209 residues: Imidazole glycerol phosphate synthase subunit HisH (209 aa).

The region spanning 1 to 205 is the Glutamine amidotransferase type-1 domain; sequence MIAIIDYGMG…KGVVETWKSS (205 aa). The active-site Nucleophile is Cys79. Active-site residues include His180 and Glu182.

As to quaternary structure, heterodimer of HisH and HisF.

The protein localises to the cytoplasm. The enzyme catalyses 5-[(5-phospho-1-deoxy-D-ribulos-1-ylimino)methylamino]-1-(5-phospho-beta-D-ribosyl)imidazole-4-carboxamide + L-glutamine = D-erythro-1-(imidazol-4-yl)glycerol 3-phosphate + 5-amino-1-(5-phospho-beta-D-ribosyl)imidazole-4-carboxamide + L-glutamate + H(+). The catalysed reaction is L-glutamine + H2O = L-glutamate + NH4(+). Its pathway is amino-acid biosynthesis; L-histidine biosynthesis; L-histidine from 5-phospho-alpha-D-ribose 1-diphosphate: step 5/9. Functionally, IGPS catalyzes the conversion of PRFAR and glutamine to IGP, AICAR and glutamate. The HisH subunit catalyzes the hydrolysis of glutamine to glutamate and ammonia as part of the synthesis of IGP and AICAR. The resulting ammonia molecule is channeled to the active site of HisF. The polypeptide is Imidazole glycerol phosphate synthase subunit HisH (Bacillus cereus (strain AH187)).